Here is a 205-residue protein sequence, read N- to C-terminus: NADH-quinone oxidoreductase subunit I (205 aa).

2 consecutive 4Fe-4S ferredoxin-type domains span residues 75 to 104 and 114 to 143; these read RLLE…METS and HEYT…HGGR. [4Fe-4S] cluster is bound by residues cysteine 84, cysteine 87, cysteine 90, cysteine 94, cysteine 123, cysteine 126, cysteine 129, and cysteine 133.

This sequence belongs to the complex I 23 kDa subunit family. In terms of assembly, NDH-1 is composed of 14 different subunits. Subunits NuoA, H, J, K, L, M, N constitute the membrane sector of the complex. [4Fe-4S] cluster serves as cofactor.

It is found in the cell inner membrane. It catalyses the reaction a quinone + NADH + 5 H(+)(in) = a quinol + NAD(+) + 4 H(+)(out). Its function is as follows. NDH-1 shuttles electrons from NADH, via FMN and iron-sulfur (Fe-S) centers, to quinones in the respiratory chain. The immediate electron acceptor for the enzyme in this species is believed to be ubiquinone. Couples the redox reaction to proton translocation (for every two electrons transferred, four hydrogen ions are translocated across the cytoplasmic membrane), and thus conserves the redox energy in a proton gradient. This Wolinella succinogenes (strain ATCC 29543 / DSM 1740 / CCUG 13145 / JCM 31913 / LMG 7466 / NCTC 11488 / FDC 602W) (Vibrio succinogenes) protein is NADH-quinone oxidoreductase subunit I.